We begin with the raw amino-acid sequence, 188 residues long: Elongation factor P-like protein (188 aa).

Belongs to the elongation factor P family.

The sequence is that of Elongation factor P-like protein from Stenotrophomonas maltophilia (strain K279a).